Here is a 1032-residue protein sequence, read N- to C-terminus: Vacuolar membrane protease (1032 aa).

The Cytoplasmic portion of the chain corresponds to 1 to 11 (MKLGNPFVFRP). A helical membrane pass occupies residues 12–32 (GPVSFWTTIVYLAIIIPLIYV). The Vacuolar portion of the chain corresponds to 33–415 (QETVPPAPSE…SAFALRGLFA (383 aa)). Asn-50, Asn-138, and Asn-147 each carry an N-linked (GlcNAc...) asparagine glycan. Zn(2+) contacts are provided by His-194 and Asp-206. The Proton acceptor role is filled by Glu-240. Zn(2+)-binding residues include Glu-241, Glu-266, and His-339. A helical membrane pass occupies residues 416–436 (WTLTLLITTPLVLFVVTYLLV). Over 437–469 (RDDKWYFFATKVDSTVGDGEETVSFGGWKGFVR) the chain is Cytoplasmic. Residues 470-490 (FPFALVVATALTIGSVFLLAK) form a helical membrane-spanning segment. The Vacuolar segment spans residues 491 to 493 (VNP). Residues 494–514 (LIIYSSGYSVWAMMISLFYFV) form a helical membrane-spanning segment. Over 515–532 (SWLLLRGAHFVRPSALQR) the chain is Cytoplasmic. Residues 533–553 (GFTLIWLFIITWVLSVFAAVA) traverse the membrane as a helical segment. Over 554 to 560 (EDRMNMG) the chain is Vacuolar. Residues 561-581 (AVYPLAFLHTFAFAAVLISLL) traverse the membrane as a helical segment. The Cytoplasmic portion of the chain corresponds to 582 to 701 (EQYALPAKQD…WSGRLPTWTW (120 aa)). Positions 595–688 (QVSGENEEEE…RKRSFPPYEN (94 aa)) are disordered. Over residues 599–608 (ENEEEEEQEQ) the composition is skewed to acidic residues. Over residues 651 to 660 (SSEQTTTFAN) the composition is skewed to polar residues. The helical transmembrane segment at 702–722 (FIQLLLLVPLYVTVLGNLALV) threads the bilayer. The Vacuolar portion of the chain corresponds to 723–738 (QTTSIGKTGTDGSSLL). A helical membrane pass occupies residues 739–759 (APLMGVGILAILLLLPLTPFI). Residues 760–766 (HRVSHHV) are Cytoplasmic-facing. The helical transmembrane segment at 767-787 (PLFLFLVFIGTLIYNLTAFPF) threads the bilayer. Residues 788 to 1032 (SDNNRFKFYF…VEITKKIKVA (245 aa)) are Vacuolar-facing. The N-linked (GlcNAc...) asparagine glycan is linked to Asn-940.

Belongs to the peptidase M28 family. Requires Zn(2+) as cofactor.

Its subcellular location is the vacuole membrane. Its function is as follows. May be involved in vacuolar sorting and osmoregulation. The chain is Vacuolar membrane protease from Metarhizium robertsii (strain ARSEF 23 / ATCC MYA-3075) (Metarhizium anisopliae (strain ARSEF 23)).